We begin with the raw amino-acid sequence, 341 residues long: S-adenosylmethionine:tRNA ribosyltransferase-isomerase (341 aa).

It belongs to the QueA family. In terms of assembly, monomer.

It localises to the cytoplasm. It catalyses the reaction 7-aminomethyl-7-carbaguanosine(34) in tRNA + S-adenosyl-L-methionine = epoxyqueuosine(34) in tRNA + adenine + L-methionine + 2 H(+). Its pathway is tRNA modification; tRNA-queuosine biosynthesis. Functionally, transfers and isomerizes the ribose moiety from AdoMet to the 7-aminomethyl group of 7-deazaguanine (preQ1-tRNA) to give epoxyqueuosine (oQ-tRNA). In Clostridium botulinum (strain Loch Maree / Type A3), this protein is S-adenosylmethionine:tRNA ribosyltransferase-isomerase.